The chain runs to 45 residues: Large ribosomal subunit protein bL34 (45 aa).

It belongs to the bacterial ribosomal protein bL34 family.

The protein is Large ribosomal subunit protein bL34 of Leifsonia xyli subsp. xyli (strain CTCB07).